We begin with the raw amino-acid sequence, 170 residues long: NADH-quinone oxidoreductase subunit B (170 aa).

Cysteine 37, cysteine 38, cysteine 102, and cysteine 131 together coordinate [4Fe-4S] cluster.

Belongs to the complex I 20 kDa subunit family. In terms of assembly, NDH-1 is composed of 14 different subunits. Subunits NuoB, C, D, E, F, and G constitute the peripheral sector of the complex. [4Fe-4S] cluster serves as cofactor.

It localises to the cell inner membrane. The catalysed reaction is a quinone + NADH + 5 H(+)(in) = a quinol + NAD(+) + 4 H(+)(out). NDH-1 shuttles electrons from NADH, via FMN and iron-sulfur (Fe-S) centers, to quinones in the respiratory chain. The immediate electron acceptor for the enzyme in this species is believed to be ubiquinone. Couples the redox reaction to proton translocation (for every two electrons transferred, four hydrogen ions are translocated across the cytoplasmic membrane), and thus conserves the redox energy in a proton gradient. This chain is NADH-quinone oxidoreductase subunit B, found in Geotalea daltonii (strain DSM 22248 / JCM 15807 / FRC-32) (Geobacter daltonii).